Here is a 648-residue protein sequence, read N- to C-terminus: Threonine--tRNA ligase (648 aa).

One can recognise a TGS domain in the interval 1-63; the sequence is MAQISLTFPD…HADATIAIHT (63 aa). Residues 247-544 form a catalytic region; the sequence is DHRKLGREMD…LIENSAGKLP (298 aa). Residues Cys344, His395, and His521 each coordinate Zn(2+).

It belongs to the class-II aminoacyl-tRNA synthetase family. In terms of assembly, homodimer. The cofactor is Zn(2+).

It localises to the cytoplasm. The catalysed reaction is tRNA(Thr) + L-threonine + ATP = L-threonyl-tRNA(Thr) + AMP + diphosphate + H(+). Functionally, catalyzes the attachment of threonine to tRNA(Thr) in a two-step reaction: L-threonine is first activated by ATP to form Thr-AMP and then transferred to the acceptor end of tRNA(Thr). Also edits incorrectly charged L-seryl-tRNA(Thr). The protein is Threonine--tRNA ligase of Roseobacter denitrificans (strain ATCC 33942 / OCh 114) (Erythrobacter sp. (strain OCh 114)).